The chain runs to 208 residues: Uracil phosphoribosyltransferase (208 aa).

Residues Arg-78, Arg-103, and 130-138 (DPMLATANS) contribute to the 5-phospho-alpha-D-ribose 1-diphosphate site. Uracil-binding positions include Ile-193 and 198-200 (GDA). Asp-199 is a 5-phospho-alpha-D-ribose 1-diphosphate binding site.

Belongs to the UPRTase family. Mg(2+) is required as a cofactor.

The enzyme catalyses UMP + diphosphate = 5-phospho-alpha-D-ribose 1-diphosphate + uracil. The protein operates within pyrimidine metabolism; UMP biosynthesis via salvage pathway; UMP from uracil: step 1/1. With respect to regulation, allosterically activated by GTP. Functionally, catalyzes the conversion of uracil and 5-phospho-alpha-D-ribose 1-diphosphate (PRPP) to UMP and diphosphate. The chain is Uracil phosphoribosyltransferase from Brucella abortus biovar 1 (strain 9-941).